We begin with the raw amino-acid sequence, 305 residues long: Ribonuclease BN (305 aa).

Zn(2+)-binding residues include H64, H66, D68, H69, H141, D212, and H270. The active-site Proton acceptor is the D68.

Belongs to the RNase Z family. RNase BN subfamily. In terms of assembly, homodimer. Zn(2+) serves as cofactor.

Functionally, zinc phosphodiesterase, which has both exoribonuclease and endoribonuclease activities. The sequence is that of Ribonuclease BN from Salmonella agona (strain SL483).